The primary structure comprises 153 residues: UPF0768 protein PB2B2.18 (153 aa).

The protein belongs to the UPF0768 family.

The protein is UPF0768 protein PB2B2.18 of Schizosaccharomyces pombe (strain 972 / ATCC 24843) (Fission yeast).